A 317-amino-acid polypeptide reads, in one-letter code: Transaldolase (317 aa).

Catalysis depends on Lys-126, which acts as the Schiff-base intermediate with substrate.

Belongs to the transaldolase family. Type 1 subfamily. Homodimer.

Its subcellular location is the cytoplasm. The catalysed reaction is D-sedoheptulose 7-phosphate + D-glyceraldehyde 3-phosphate = D-erythrose 4-phosphate + beta-D-fructose 6-phosphate. It functions in the pathway carbohydrate degradation; pentose phosphate pathway; D-glyceraldehyde 3-phosphate and beta-D-fructose 6-phosphate from D-ribose 5-phosphate and D-xylulose 5-phosphate (non-oxidative stage): step 2/3. Functionally, transaldolase is important for the balance of metabolites in the pentose-phosphate pathway. The chain is Transaldolase from Burkholderia thailandensis (strain ATCC 700388 / DSM 13276 / CCUG 48851 / CIP 106301 / E264).